The chain runs to 428 residues: Histone deacetylase 3 (428 aa).

A histone deacetylase region spans residues 3-316 (KTVAYFYDPD…WTYETSLLVD (314 aa)). 1D-myo-inositol 1,4,5,6-tetrakisphosphate is bound by residues histidine 17, glycine 21, and lysine 25. Histidine 135 is a catalytic residue. Zn(2+) contacts are provided by aspartate 170, histidine 172, and aspartate 259. Arginine 265 contacts 1D-myo-inositol 1,4,5,6-tetrakisphosphate. Basic and acidic residues-rich tracts occupy residues 386-405 (SYER…DNYS) and 415-428 (DGDH…DVEI). A disordered region spans residues 386–428 (SYERTDEPDPEERGSEDNYSRPEASNEFYDGDHDNDKESDVEI).

It belongs to the histone deacetylase family. HD type 1 subfamily.

The protein resides in the nucleus. The protein localises to the chromosome. It is found in the cytoplasm. Its subcellular location is the cytosol. The enzyme catalyses N(6)-acetyl-L-lysyl-[histone] + H2O = L-lysyl-[histone] + acetate. The catalysed reaction is N(6)-acetyl-L-lysyl-[protein] + H2O = L-lysyl-[protein] + acetate. It catalyses the reaction N(6)-(2E)-butenoyl-L-lysyl-[protein] + H2O = (2E)-2-butenoate + L-lysyl-[protein]. It carries out the reaction N(6)-(2-hydroxyisobutanoyl)-L-lysyl-[protein] + H2O = 2-hydroxy-2-methylpropanoate + L-lysyl-[protein]. The enzyme catalyses N(6)-[(S)-lactoyl]-L-lysyl-[protein] + H2O = (S)-lactate + L-lysyl-[protein]. Its activity is regulated as follows. Inositol tetraphosphate (1D-myo-inositol 1,4,5,6-tetrakisphosphate) promotes the histone deacetylase activity by acting as an intermolecular glue between hdac3 and N-Cor repressor complex components. Histone deacetylase that catalyzes the deacetylation of lysine residues on the N-terminal part of the core histones (H2A, H2B, H3 and H4), and some other non-histone substrates. Histone deacetylation gives a tag for epigenetic repression and plays an important role in transcriptional regulation, cell cycle progression and developmental events. Histone deacetylases act via the formation of large multiprotein complexes, such as N-Cor repressor complex, which activate the histone deacetylase activity. Participates in the BCL6 transcriptional repressor activity by deacetylating the H3 'Lys-27' (H3K27) on enhancer elements, antagonizing EP300 acetyltransferase activity and repressing proximal gene expression. Also functions as a deacetylase for non-histone targets. In addition to protein deacetylase activity, also acts as a protein-lysine deacylase by recognizing other acyl groups: catalyzes removal of (2E)-butenoyl (crotonyl), lactoyl (lactyl) and 2-hydroxyisobutanoyl (2-hydroxyisobutyryl) acyl groups from lysine residues, leading to protein decrotonylation, delactylation and de-2-hydroxyisobutyrylation, respectively. This Xenopus tropicalis (Western clawed frog) protein is Histone deacetylase 3 (hdac3).